Here is a 56-residue protein sequence, read N- to C-terminus: Large ribosomal subunit protein bL33 (56 aa).

Over residues 1 to 12 the composition is skewed to basic and acidic residues; it reads MASKGGREKIKL. A disordered region spans residues 1–27; the sequence is MASKGGREKIKLESTAGTGHFYTTNKN.

Belongs to the bacterial ribosomal protein bL33 family.

In Leptothrix cholodnii (strain ATCC 51168 / LMG 8142 / SP-6) (Leptothrix discophora (strain SP-6)), this protein is Large ribosomal subunit protein bL33.